The primary structure comprises 476 residues: Nodulation protein NoeA (476 aa).

Functionally, not known; does not seem to participate in nod factor synthesis but required for nodulation on some specific Medicago species such as M.littoralis. In Rhizobium meliloti (strain 1021) (Ensifer meliloti), this protein is Nodulation protein NoeA (noeA).